Reading from the N-terminus, the 81-residue chain is RNA-binding protein Hfq (81 aa).

The 61-residue stretch at 11-71 folds into the Sm domain; it reads DIFLNSARKN…VSTITPLRPI (61 aa).

The protein belongs to the Hfq family. As to quaternary structure, homohexamer.

Functionally, RNA chaperone that binds small regulatory RNA (sRNAs) and mRNAs to facilitate mRNA translational regulation in response to envelope stress, environmental stress and changes in metabolite concentrations. Also binds with high specificity to tRNAs. The sequence is that of RNA-binding protein Hfq from Clostridium acetobutylicum (strain ATCC 824 / DSM 792 / JCM 1419 / IAM 19013 / LMG 5710 / NBRC 13948 / NRRL B-527 / VKM B-1787 / 2291 / W).